Reading from the N-terminus, the 97-residue chain is Small integral membrane protein 8 (97 aa).

A disordered region spans residues 1 to 22; that stretch reads MSSAPEPPAFKKEPPKEKDLGN. Basic and acidic residues predominate over residues 9–20; it reads AFKKEPPKEKDL. Residues 48-70 form a helical membrane-spanning segment; the sequence is PVMAFGLITISLCVAYIGYLHAT.

It belongs to the SMIM8 family.

The protein localises to the membrane. This chain is Small integral membrane protein 8 (SMIM8), found in Bos taurus (Bovine).